The following is a 204-amino-acid chain: Ribonuclease HII (204 aa).

Positions 16–204 constitute an RNase H type-2 domain; it reads ESIAGCDEVG…RRSFLKKILK (189 aa). 3 residues coordinate a divalent metal cation: aspartate 22, glutamate 23, and aspartate 120.

It belongs to the RNase HII family. It depends on Mn(2+) as a cofactor. The cofactor is Mg(2+).

It is found in the cytoplasm. The catalysed reaction is Endonucleolytic cleavage to 5'-phosphomonoester.. In terms of biological role, endonuclease that specifically degrades the RNA of RNA-DNA hybrids. This Alkaliphilus metalliredigens (strain QYMF) protein is Ribonuclease HII.